Here is a 91-residue protein sequence, read N- to C-terminus: Small ribosomal subunit protein bS20 (91 aa).

The span at 1 to 21 (MPLHKSAEKRLRQSARRNERN) shows a compositional bias: basic and acidic residues. Disordered regions lie at residues 1–25 (MPLHKSAEKRLRQSARRNERNRARK) and 70–91 (PNKASRKKSQLSRMLNNYMKAE). Over residues 70–79 (PNKASRKKSQ) the composition is skewed to basic residues.

This sequence belongs to the bacterial ribosomal protein bS20 family.

Binds directly to 16S ribosomal RNA. This Chlorobium phaeobacteroides (strain BS1) protein is Small ribosomal subunit protein bS20.